Reading from the N-terminus, the 213-residue chain is Kynurenine formamidase (213 aa).

Trp18 is a substrate binding site. Residues His48, His52, and Asp54 each contribute to the Zn(2+) site. The Proton donor/acceptor role is filled by His58. Zn(2+) is bound by residues His160 and Glu172.

This sequence belongs to the Cyclase 1 superfamily. KynB family. As to quaternary structure, homodimer. The cofactor is Zn(2+).

The enzyme catalyses N-formyl-L-kynurenine + H2O = L-kynurenine + formate + H(+). It participates in amino-acid degradation; L-tryptophan degradation via kynurenine pathway; L-kynurenine from L-tryptophan: step 2/2. Its function is as follows. Catalyzes the hydrolysis of N-formyl-L-kynurenine to L-kynurenine, the second step in the kynurenine pathway of tryptophan degradation. This chain is Kynurenine formamidase, found in Burkholderia ambifaria (strain ATCC BAA-244 / DSM 16087 / CCUG 44356 / LMG 19182 / AMMD) (Burkholderia cepacia (strain AMMD)).